The sequence spans 359 residues: 4-galactosyl-N-acetylglucosaminide 3-alpha-L-fucosyltransferase FUT6 (359 aa).

The Cytoplasmic portion of the chain corresponds to 1–14 (MDPLGPAKPQWSWR). A helical; Signal-anchor for type II membrane protein transmembrane segment spans residues 15–34 (CCLTTLLFQLLMAVCFFSYL). Residues 35–359 (RVSQDDPTVY…QTRGIAAWFT (325 aa)) lie on the Lumenal side of the membrane. Residues asparagine 46, asparagine 91, asparagine 153, and asparagine 184 are each glycosylated (N-linked (GlcNAc...) asparagine). The interval 73–112 (KPIALPRCSEMVPGTADCNITADRKVYPQADAVIVHHREV) is determines site-specific fucosylation.

It belongs to the glycosyltransferase 10 family. Homodimer and monomer. Monomer (secreted form). In terms of processing, N-glycosylated. Proteolytic cleavage releases a secreted glycoform of 43 kDa. In terms of tissue distribution, kidney, liver, colon, small intestine, bladder, uterus and salivary gland.

The protein resides in the golgi apparatus. The protein localises to the golgi stack membrane. It localises to the secreted. It carries out the reaction a beta-D-galactosyl-(1-&gt;4)-N-acetyl-beta-D-glucosaminyl derivative + GDP-beta-L-fucose = a beta-D-galactosyl-(1-&gt;4)-[alpha-L-fucosyl-(1-&gt;3)]-N-acetyl-beta-D-glucosaminyl derivative + GDP + H(+). The catalysed reaction is an N-acetyl-alpha-neuraminyl-(2-&gt;3)-beta-D-galactosyl-(1-&gt;4)-N-acetyl-beta-D-glucosaminyl derivative + GDP-beta-L-fucose = an alpha-Neu5Ac-(2-&gt;3)-beta-D-Gal-(1-&gt;4)-[alpha-L-Fuc-(1-&gt;3)]-beta-D-GlcNAc derivative + GDP + H(+). It catalyses the reaction an alpha-Neu5Ac-(2-&gt;3)-beta-D-Gal-(1-&gt;4)-beta-D-GlcNAc-(1-&gt;3)-beta-D-Gal-(1-&gt;4)-[alpha-L-Fuc-(1-&gt;3)]-beta-D-GlcNAc derivative + GDP-beta-L-fucose = an alpha-Neu5Ac-(2-&gt;3)-beta-D-Gal-(1-&gt;4)-[alpha-L-Fuc-(1-&gt;3)]-beta-D-GlcNAc-(1-&gt;3)-beta-D-Gal-(1-&gt;4)-[alpha-L-Fuc-(1-&gt;3)]-beta-D-GlcNAc derivative + GDP + H(+). The enzyme catalyses a neolactoside nLc6Cer + GDP-beta-L-fucose = beta-D-Gal-(1-&gt;4)-[alpha-L-Fuc-(1-&gt;3)]-beta-D-GlcNAc-(1-&gt;3)-beta-D-Gal-(1-&gt;4)-beta-D-GlcNAc-(1-&gt;3)-beta-D-Gal-(1-&gt;4)-beta-D-Glc-(1&lt;-&gt;1')-Cer + GDP + H(+). It carries out the reaction a neolactoside nLc6Cer + GDP-beta-L-fucose = beta-D-galactosyl-(1-&gt;4)-N-acetyl-beta-D-glucosaminyl-(1-&gt;3)-beta-D-galactosyl-(1-&gt;4)-[alpha-L-fucosyl-(1-&gt;3)]-N-acetyl-beta-D-glucosaminyl-(1-&gt;3)-beta-D-galactosyl-(1-&gt;4)-beta-D-glucosyl-(1&lt;-&gt;1')-ceramide + GDP + H(+). The catalysed reaction is a neolactoside VI(3)-alpha-NeuNAc-nLc6Cer + GDP-beta-L-fucose = a neolactoside VI(3)-alpha-NeuAc,V(3)-alphaFuc-nLc6Cer + GDP + H(+). It catalyses the reaction beta-D-galactosyl-(1-&gt;4)-N-acetyl-D-glucosamine + GDP-beta-L-fucose = beta-D-galactosyl-(1-&gt;4)-[alpha-L-fucosyl-(1-&gt;3)]-N-acetyl-D-glucosamine + GDP + H(+). The enzyme catalyses N-acetyl-alpha-neuraminosyl-(2-&gt;3)-beta-D-galactosyl-(1-&gt;4)-N-acetyl-beta-D-glucosamine + GDP-beta-L-fucose = N-acetyl-alpha-neuraminosyl-(2-&gt;3)-beta-D-galactosyl-(1-&gt;4)-[alpha-L-fucosyl-(1-&gt;3)]-N-acetyl-beta-D-glucosamine + GDP + H(+). It carries out the reaction lactose + GDP-beta-L-fucose = beta-D-galactosyl-(1-&gt;4)-[alpha-L-fucosyl-(1-&gt;3)]-D-glucose + GDP + H(+). The catalysed reaction is alpha-L-Fuc-(1-&gt;2)-beta-D-Gal-(1-&gt;4)-D-Glc + GDP-beta-L-fucose = alpha-L-Fuc-(1-&gt;2)-beta-D-Gal-(1-&gt;4)-[alpha-L-Fuc-(1-&gt;3)]-D-Glc + GDP + H(+). It catalyses the reaction a beta-D-galactosyl-(1-&gt;4)-N-acetyl-beta-D-6-sulfooxy-glucosaminyl derivative + GDP-beta-L-fucose = a beta-D-galactosyl-(1-&gt;4)-[alpha-L-fucosyl-(1-&gt;3)]-N-acetyl-beta-D-6-sulfooxy-glucosaminyl derivative + GDP + H(+). It functions in the pathway protein modification; protein glycosylation. In terms of biological role, catalyzes the transfer of L-fucose, from a guanosine diphosphate-beta-L-fucose, to the N-acetyl glucosamine (GlcNAc) of a distal alpha2,3 sialylated lactosamine unit of a glycoprotein- or a glycolipid-linked sialopolylactosamines chain or of a distal or internal lactosamine unit of a neutral glycoprotein- or a glycolipid-linked polylactosamines chain through an alpha-1,3 glycosidic linkage and participates in surface expression of the sialyl Lewis X (sLe(x)), Lewis X (Le(x)) and non sialylated VIM2 determinants. Moreover transfers fucose to H-type 2 (Fucalpha1-2Galbeta1-4GlcNAc) chain acceptor substrates and participates in difucosylated sialyl Lewis x determinants. Also fucosylates a polylactosamine substrate having a 6 sulfate modification at the GlcNAc moiety and gives rise to sialyl and non-sialyl 6-sulfo lewis X. Does not have activity towards type 1 ((Galbeta1-3GlcNAc)) and H-type 1 chain (Fucalpha1-2Galbeta1-3GlcNAc) acceptors substrates. Does not have alpha(1,3)-fucosyltransferase activity. The polypeptide is 4-galactosyl-N-acetylglucosaminide 3-alpha-L-fucosyltransferase FUT6 (Homo sapiens (Human)).